We begin with the raw amino-acid sequence, 303 residues long: Probable 5-dehydro-4-deoxyglucarate dehydratase (303 aa).

Belongs to the DapA family.

The enzyme catalyses 5-dehydro-4-deoxy-D-glucarate + H(+) = 2,5-dioxopentanoate + CO2 + H2O. The protein operates within carbohydrate acid metabolism; D-glucarate degradation; 2,5-dioxopentanoate from D-glucarate: step 2/2. The sequence is that of Probable 5-dehydro-4-deoxyglucarate dehydratase from Pseudomonas savastanoi pv. phaseolicola (strain 1448A / Race 6) (Pseudomonas syringae pv. phaseolicola (strain 1448A / Race 6)).